Here is a 130-residue protein sequence, read N- to C-terminus: Larval cuticle protein 1 (130 aa).

The signal sequence occupies residues 1 to 16; it reads MFKFVMICAVLGLAVA. The Chitin-binding type R&amp;R domain occupies 43 to 104; sequence ADGFDSSLHT…PSGAWIPTPP (62 aa).

Its function is as follows. Component of the larval cuticle. This chain is Larval cuticle protein 1 (Lcp1), found in Drosophila melanogaster (Fruit fly).